We begin with the raw amino-acid sequence, 356 residues long: Retinoic acid-induced protein 3 (356 aa).

The Extracellular portion of the chain corresponds to 1 to 35; it reads MTTPTTAPSGCRSDLDSRYHRLCDLAEGWGIALET. A helical transmembrane segment spans residues 36 to 56; it reads LAAVGAVATVACMFALVFLIC. Residues 57 to 68 are Cytoplasmic-facing; the sequence is KVQDSNKRKMLP. A helical membrane pass occupies residues 69–89; that stretch reads AQFLFLLGVLGVFGLTFAFII. At 90–101 the chain is on the extracellular side; that stretch reads KLDGATGPTRFF. A helical membrane pass occupies residues 102–122; that stretch reads LFGVLFAICFSCLLAHAFNLI. Over 123–131 the chain is Cytoplasmic; that stretch reads KLVRGRKPL. The helical transmembrane segment at 132-152 threads the bilayer; the sequence is SWLVILSLAVGFSLVQDVIAI. Over 153–178 the chain is Extracellular; that stretch reads EYLVLTMNRTNVNVFSELPAPRRNED. N-linked (GlcNAc...) asparagine glycosylation occurs at asparagine 160. The chain crosses the membrane as a helical span at residues 179–199; the sequence is FVMLLIYVLVLMVLTFFTSFL. The Cytoplasmic segment spans residues 200 to 214; that stretch reads VFCGSFSGWKRHGFH. Residues 215 to 235 form a helical membrane-spanning segment; it reads ICFTSFLSIAIWVAWIVLLLI. Over 236–244 the chain is Extracellular; the sequence is PDIDRKWDD. The chain crosses the membrane as a helical span at residues 245–265; it reads TILSTALVANGWVFLAFYILP. Residues 266–356 lie on the Cytoplasmic side of the membrane; the sequence is EFRQLPRQRS…NDYEGRKGDS (91 aa). The residue at position 303 (serine 303) is a Phosphoserine. Phosphotyrosine is present on residues tyrosine 318 and tyrosine 321. Residues 336 to 356 are disordered; the sequence is IPRAQAPASPYNDYEGRKGDS. At serine 344 the chain carries Phosphoserine. 2 positions are modified to phosphotyrosine: tyrosine 346 and tyrosine 349.

It belongs to the G-protein coupled receptor 3 family. In terms of assembly, interacts (via its transmembrane domain) with EGFR. Post-translationally, phosphorylated in two conserved double-tyrosine motifs, Tyr 318/Tyr-321 and Tyr-346/Tyr-349 by EGFR. Tyr-318 and Tyr-321 are the preferred residues responsible for EGFR-mediated GPRC5A phosphorylation. In terms of tissue distribution, expressed predominantly in normal fetal and adult lung. Almost undetectable or expressed at very low levels in other tissues.

It is found in the cell membrane. Functionally, orphan receptor. Could be involved in modulating differentiation and maintaining homeostasis of epithelial cells. This retinoic acid-inducible GPCR provides evidence for a possible interaction between retinoid and G-protein signaling pathways. Functions as a negative modulator of EGFR signaling. Acts as a lung tumor suppressor. The sequence is that of Retinoic acid-induced protein 3 (Gprc5a) from Mus musculus (Mouse).